A 334-amino-acid polypeptide reads, in one-letter code: Aspartate carbamoyltransferase catalytic subunit (334 aa).

Arg71 and Thr72 together coordinate carbamoyl phosphate. An L-aspartate-binding site is contributed by Lys99. Residues Arg121, His151, and Gln154 each coordinate carbamoyl phosphate. The L-aspartate site is built by Arg184 and Arg239. The carbamoyl phosphate site is built by Gly280 and Pro281.

It belongs to the aspartate/ornithine carbamoyltransferase superfamily. ATCase family. As to quaternary structure, heterododecamer (2C3:3R2) of six catalytic PyrB chains organized as two trimers (C3), and six regulatory PyrI chains organized as three dimers (R2).

The catalysed reaction is carbamoyl phosphate + L-aspartate = N-carbamoyl-L-aspartate + phosphate + H(+). It functions in the pathway pyrimidine metabolism; UMP biosynthesis via de novo pathway; (S)-dihydroorotate from bicarbonate: step 2/3. In terms of biological role, catalyzes the condensation of carbamoyl phosphate and aspartate to form carbamoyl aspartate and inorganic phosphate, the committed step in the de novo pyrimidine nucleotide biosynthesis pathway. The protein is Aspartate carbamoyltransferase catalytic subunit of Pseudomonas syringae pv. syringae (strain B728a).